Consider the following 216-residue polypeptide: Uracil phosphoribosyltransferase (216 aa).

Lys30–Arg34 is a binding site for GTP. 5-phospho-alpha-D-ribose 1-diphosphate contacts are provided by residues Arg80, Arg105, and Asp140–Thr148. Uracil-binding positions include Ile203 and Gly208–Ala210. Asp209 is a 5-phospho-alpha-D-ribose 1-diphosphate binding site.

Belongs to the UPRTase family. The cofactor is Mg(2+).

It catalyses the reaction UMP + diphosphate = 5-phospho-alpha-D-ribose 1-diphosphate + uracil. The protein operates within pyrimidine metabolism; UMP biosynthesis via salvage pathway; UMP from uracil: step 1/1. With respect to regulation, allosterically activated by GTP. Functionally, catalyzes the conversion of uracil and 5-phospho-alpha-D-ribose 1-diphosphate (PRPP) to UMP and diphosphate. The protein is Uracil phosphoribosyltransferase of Saccharolobus islandicus (strain M.16.4 / Kamchatka #3) (Sulfolobus islandicus).